The primary structure comprises 822 residues: Endonuclease MutS2 (822 aa).

Residue 348–355 coordinates ATP; sequence GPNTGGKT. The tract at residues 707–737 is disordered; sequence SLNGKKVEPPPKSEPVPKKVKAEPPATEAKS. Basic and acidic residues predominate over residues 709 to 728; it reads NGKKVEPPPKSEPVPKKVKA. Residues 749-822 form the Smr domain; that stretch reads LDCRGDRLER…GAGVTIAYLR (74 aa).

Belongs to the DNA mismatch repair MutS family. MutS2 subfamily. In terms of assembly, homodimer. Binds to stalled ribosomes, contacting rRNA.

In terms of biological role, endonuclease that is involved in the suppression of homologous recombination and thus may have a key role in the control of bacterial genetic diversity. Its function is as follows. Acts as a ribosome collision sensor, splitting the ribosome into its 2 subunits. Detects stalled/collided 70S ribosomes which it binds and splits by an ATP-hydrolysis driven conformational change. Acts upstream of the ribosome quality control system (RQC), a ribosome-associated complex that mediates the extraction of incompletely synthesized nascent chains from stalled ribosomes and their subsequent degradation. Probably generates substrates for RQC. In Synechocystis sp. (strain ATCC 27184 / PCC 6803 / Kazusa), this protein is Endonuclease MutS2.